Reading from the N-terminus, the 217-residue chain is Twisted gastrulation protein homolog 1-A (217 aa).

The first 26 residues, 1–26, serve as a signal peptide directing secretion; the sequence is MRPALFLCPVLISVLFLLSSLSLISG. N-linked (GlcNAc...) asparagine glycans are attached at residues Asn-53 and Asn-147.

The protein belongs to the twisted gastrulation protein family.

It is found in the secreted. Involved in dorsal-ventral patterning. Appears to function predominantly as a ventralizing factor, through its actions as a BMP signaling agonist, acting through both chd-dependent and chd-independent mechanisms. May also antagonize BMP signaling, probably via formation of ternary complexes with chd and BMPs, resulting in dorsalization. This is Twisted gastrulation protein homolog 1-A (twsg1a) from Danio rerio (Zebrafish).